A 258-amino-acid chain; its full sequence is Isoprenyl transferase (258 aa).

Asp24 is an active-site residue. Asp24 is a Mg(2+) binding site. Substrate contacts are provided by residues 25–28, Trp29, Arg37, His41, and 69–71; these read GNGR and SSE. The active-site Proton acceptor is the Asn72. Substrate-binding positions include Trp73, Arg75, Arg190, and 196 to 198; that span reads RIS. Residue Glu209 participates in Mg(2+) binding.

This sequence belongs to the UPP synthase family. In terms of assembly, homodimer. Mg(2+) is required as a cofactor.

Catalyzes the condensation of isopentenyl diphosphate (IPP) with allylic pyrophosphates generating different type of terpenoids. This is Isoprenyl transferase from Ralstonia nicotianae (strain ATCC BAA-1114 / GMI1000) (Ralstonia solanacearum).